The primary structure comprises 340 residues: Major histocompatibility complex class I-related protein 1 (340 aa).

A signal peptide spans 1 to 22; sequence MGELTAFLLPLIIVLMVKHSNS. The interval 23–109 is alpha-1; sequence RTHSLRYFRL…KRLQRHYNHS (87 aa). The tract at residues 23-201 is antigen-binding cleft; it reads RTHSLRYFRL…EYGKDTLQRT (179 aa). Residues 23–302 are Extracellular-facing; the sequence is RTHSLRYFRL…QESEAIPLVM (280 aa). 8-(9H-purin-6-yl)-2-oxa-8-azabicyclo[3.3.1]nona-3,6-diene-4,6-dicarbaldehyde contacts are provided by Y29 and R31. R31, S46, and K65 together coordinate 5-(2-oxoethylideneamino)-6-(D-ribitylamino)uracil. 5-(2-oxopropylideneamino)-6-(D-ribitylamino)uracil contacts are provided by R31, S46, and K65. 7-hydroxy-6-methyl-8-(1-D-ribityl)lumazine-binding residues include R31, S46, and K65. 8-(9H-purin-6-yl)-2-oxa-8-azabicyclo[3.3.1]nona-3,6-diene-4,6-dicarbaldehyde-binding residues include K65 and H80. K65 is a 2-amino-4-oxopteridine-6-carbaldehyde binding site. Residue K65 coordinates pyridoxal. An N-linked (GlcNAc...) asparagine glycan is attached at N107. The interval 110–201 is alpha-2; that stretch reads GSHTYQRMIG…EYGKDTLQRT (92 aa). An 8-(9H-purin-6-yl)-2-oxa-8-azabicyclo[3.3.1]nona-3,6-diene-4,6-dicarbaldehyde-binding site is contributed by R116. Residues R116, Y174, and Q175 each coordinate 5-(2-oxoethylideneamino)-6-(D-ribitylamino)uracil. 5-(2-oxopropylideneamino)-6-(D-ribitylamino)uracil contacts are provided by R116, Y174, and Q175. R116, Y174, and Q175 together coordinate 7-hydroxy-6-methyl-8-(1-D-ribityl)lumazine. Cystine bridges form between C120-C183 and C222-C278. The alpha-3 stretch occupies residues 202 to 293; sequence EPPLVRVNRK…GVHVVLQVPQ (92 aa). The region spanning 203-282 is the Ig-like C1-type domain; the sequence is PPLVRVNRKE…SNLYSCHVEH (80 aa). Residues 294-302 are connecting peptide; that stretch reads ESEAIPLVM. The chain crosses the membrane as a helical span at residues 303–323; sequence KAVSGSIVFVIVLAGVGVLVW. Residues 324–340 are Cytoplasmic-facing; it reads RRRPREQNGAVYLPTPD.

It belongs to the MHC class I family. As to quaternary structure, heterotrimer that consists of MR1, B2M and metabolite antigen. Major classes of metabolite ligands presented by MR1 include riboflavin-related antigens, pyrimidines and ribityl lumazines, nucleobase adducts and folate derivatives. Forms reversible covalent Schiff base complexes with microbial pyrimidine-based metabolite, which serves as a molecular switch triggering complete folding, stable association with B2M and translocation of the ternary complex from endoplasmic reticulum to the plasma membrane. Alternatively, forms non-Schiff base complexes with ribityl lumazines. On antigen-presenting cells, the ternary complex interacts with TCR on MR1-restricted T cells. Interacts with TAPBP and TAPBPL chaperones in the endoplasmic reticulum. TAPBP associated or not with MHC class I peptide loading complex binds ligand-free MR1 or MR1-B2M complex, providing for stable MR1 pools ready for metabolite antigen processing. TAPBPL interacts with MR1 in a ligand-independent way; this interaction may stabilize MR1 pool and facilitate ligand loading and dissociation. Structurally, MR1-B2M heterodimer adopts a topology similar to classical MHC class I molecules, with alpha-1 and alpha-2 domains of MR1 forming the antigen-binding cleft composed of two alpha-helices resting on a floor of 7-stranded anti-parallel beta-pleated sheet. MR1-B2M heterodimer (via alpha-helices) interacts with TCR (via CDR domains). In terms of processing, N-glycosylated.

The protein localises to the cell membrane. Its subcellular location is the endoplasmic reticulum membrane. It localises to the golgi apparatus membrane. The protein resides in the early endosome membrane. It is found in the late endosome membrane. Its function is as follows. Antigen-presenting molecule specialized in displaying microbial pyrimidine-based metabolites to alpha-beta T cell receptors (TCR) on innate-type mucosal-associated invariant T (MAIT) cells. In complex with B2M preferentially presents riboflavin-derived metabolites to semi-invariant TCRs on MAIT cells, guiding immune surveillance of the microbial metabolome at mucosal epithelial barriers. Signature pyrimidine-based microbial antigens are generated via non-enzymatic condensation of metabolite intermediates of the riboflavin pathway with by-products arising from other metabolic pathways such as glycolysis. Typical potent antigenic metabolites are 5-(2-oxoethylideneamino)-6-D-ribitylaminouracil (5-OE-RU) and 5-(2-oxopropylideneamino)-6-D-ribitylaminouracil (5-OP-RU), products of condensation of 5-amino-6-D-ribityaminouracil (5-A-RU) with glyoxal or methylglyoxal by-products, respectively. May present microbial antigens to various MAIT cell subsets, providing for unique recognition of diverse microbes, including pathogens that do not synthesize riboflavin. Upon antigen recognition, elicits rapid innate-type MAIT cell activation to eliminate pathogenic microbes by directly killing infected cells. During T cell development, drives thymic selection and post-thymic terminal differentiation of MAIT cells in a process dependent on commensal microflora. Acts as an immune sensor of cancer cell metabolome. May present a tumor-specific or -associated metabolite essential for cancer cell survival to a pan-cancer TCR on a non-MAIT CD8-positive T cell clone, triggering T cell-mediated killing of a wide range of cancer cell types. May present tumor-enriched pyridoxal and pyridoxal 5'-phosphate antigens, enabling preferential recognition of cancer cells. Presents nucleobase carbonyl adducts generated during oxidative stress. Captures M3Ade, a nucleobase adduct composed of one adenine modified by a malondialdehyde trimer, for recognition by MR1-restricted T cell clones expressing a polyclonal TCR repertoire. The protein is Major histocompatibility complex class I-related protein 1 of Pongo abelii (Sumatran orangutan).